The sequence spans 599 residues: Adenine deaminase (599 aa).

The protein belongs to the metallo-dependent hydrolases superfamily. Adenine deaminase family. It depends on Mn(2+) as a cofactor.

It catalyses the reaction adenine + H2O + H(+) = hypoxanthine + NH4(+). This Clostridium botulinum (strain 657 / Type Ba4) protein is Adenine deaminase.